Reading from the N-terminus, the 224-residue chain is Large ribosomal subunit protein uL1 (224 aa).

It belongs to the universal ribosomal protein uL1 family. Part of the 50S ribosomal subunit.

Its function is as follows. Binds directly to 23S rRNA. The L1 stalk is quite mobile in the ribosome, and is involved in E site tRNA release. Functionally, protein L1 is also a translational repressor protein, it controls the translation of the L11 operon by binding to its mRNA. The protein is Large ribosomal subunit protein uL1 of Borrelia hermsii (strain HS1 / DAH).